The chain runs to 325 residues: D-alanine--D-alanine ligase (325 aa).

Residues 109-309 (KRVCKERMLP…FCTLLDQLIE (201 aa)) enclose the ATP-grasp domain. 136-191 (CRRLPFPMFVKPANLGSSVGISKAHDEQELEAAFSLAKQYDRKIIVERGIEGRELE) contributes to the ATP binding site. Residues Asp262, Glu276, and Asn278 each contribute to the Mg(2+) site.

This sequence belongs to the D-alanine--D-alanine ligase family. Mg(2+) is required as a cofactor. Mn(2+) serves as cofactor.

It is found in the cytoplasm. The enzyme catalyses 2 D-alanine + ATP = D-alanyl-D-alanine + ADP + phosphate + H(+). Its pathway is cell wall biogenesis; peptidoglycan biosynthesis. Cell wall formation. The protein is D-alanine--D-alanine ligase of Solibacter usitatus (strain Ellin6076).